Here is an 800-residue protein sequence, read N- to C-terminus: Phosphoinositide 3-kinase adapter protein 1 (800 aa).

Residues 8-145 enclose the TIR domain; it reads GGYDVLILYA…AVKKAISEDS (138 aa). A necessary and sufficient to mediate inhibition of NF-kappa-B downstream of activated TLRs region spans residues 10-144; the sequence is YDVLILYASD…EAVKKAISED (135 aa). Positions 185–321 constitute a DBB domain; that stretch reads VQPDHIRCGV…NIPASGLHLF (137 aa). A Phosphotyrosine modification is found at tyrosine 266. Tyrosine 423, tyrosine 448, and tyrosine 463 each carry phosphotyrosine; by SYK. The tract at residues 527 to 548 is disordered; sequence EMASRPPVPVPRPESSSPQPDN. Residues 643–663 are a coiled coil; it reads QQENLKRLRDSITRRQMEKQK. The span at 702–713 shows a compositional bias: basic and acidic residues; that stretch reads PKKELKRGDWKT. Residues 702-800 are disordered; that stretch reads PKKELKRGDW…YPPPVPPRGR (99 aa). The segment covering 714-737 has biased composition (low complexity); it reads ESTSSTTSSASNRSSTRSILSVSS. Over residues 749–759 the composition is skewed to polar residues; the sequence is SEASRSRSPIP. Composition is skewed to pro residues over residues 767-777 and 791-800; these read LPLPERPPRVP and YPPPVPPRGR.

Homooligomer. Interacts (phosphorylated on tyrosine residues within YXXM motifs) with PIK3R1 (via SH2 domain); required for BCR- and TLR-mediated activation of phosphoinositide 3-kinase. Post-translationally, constitutively phosphorylated. Phosphorylated on tyrosine residues within the YXXM motifs by BTK and SYK. Isoform 1 and isoform 2 are phosphorylated on tyrosine residues, most likely within the YXXM motifs, via CD19 activation.

Its subcellular location is the cytoplasm. It localises to the cell membrane. Functionally, signaling adapter that contributes to B-cell development by linking B-cell receptor (BCR) signaling to the phosphoinositide 3-kinase (PI3K)-Akt signaling pathway. Has a complementary role to the BCR coreceptor CD19, coupling BCR and PI3K activation by providing a docking site for the PI3K subunit PIK3R1. Alternatively, links Toll-like receptor (TLR) signaling to PI3K activation, a process preventing excessive inflammatory cytokine production. Also involved in the activation of PI3K in natural killer cells. May be involved in the survival of mature B-cells via activation of REL. The chain is Phosphoinositide 3-kinase adapter protein 1 (PIK3AP1) from Gallus gallus (Chicken).